A 189-amino-acid polypeptide reads, in one-letter code: Ion-translocating oxidoreductase complex subunit B (189 aa).

Positions 1 to 26 are hydrophobic; the sequence is MSGIFIAIILLTILALLFGILLGFAA. In terms of domain architecture, 4Fe-4S spans 32-90; the sequence is EGDPLVDQLEALLPQTQCGQCGYPGCRPYAEAIANGEKINLCPPGGSATMEKLAEMAGV. C49, C52, C57, C73, C114, C117, C120, C124, C144, C147, C150, and C154 together coordinate [4Fe-4S] cluster. 4Fe-4S ferredoxin-type domains lie at 105 to 134 and 135 to 164; these read KVAYIREEECIGCTKCIQACPVDAILGSGK and LMHTVITDYCTGCDLCVAPCPVDCIDMLPV.

Belongs to the 4Fe4S bacterial-type ferredoxin family. RnfB subfamily. As to quaternary structure, the complex is composed of six subunits: RnfA, RnfB, RnfC, RnfD, RnfE and RnfG. The cofactor is [4Fe-4S] cluster.

The protein resides in the cell inner membrane. In terms of biological role, part of a membrane-bound complex that couples electron transfer with translocation of ions across the membrane. The sequence is that of Ion-translocating oxidoreductase complex subunit B from Shewanella sediminis (strain HAW-EB3).